The sequence spans 99 residues: Cysteine-rich C-terminal protein 1 (99 aa).

Disordered stretches follow at residues 1–42 (MSSQ…CCGS) and 65–99 (RRRR…CSGC). Over residues 22–32 (APCPAPAPTPA) the composition is skewed to pro residues. Over residues 83–99 (QRSQRSNNRSSGCCSGC) the composition is skewed to low complexity.

This chain is Cysteine-rich C-terminal protein 1 (CRCT1), found in Homo sapiens (Human).